A 598-amino-acid polypeptide reads, in one-letter code: Peroxisomal targeting signal receptor (598 aa).

Disordered regions lie at residues 1–54, 135–154, and 208–237; these read MSFM…GEMS, RGGS…MQGG, and AVGK…TTTE. Residues 9 to 22 are compositionally biased toward polar residues; the sequence is ECSTGRNPLSQFTK. A Glycyl cysteine thioester (Cys-Gly) (interchain with G-Cter in ubiquitin) cross-link involves residue cysteine 10. Residue lysine 22 forms a Glycyl lysine isopeptide (Lys-Gly) (interchain with G-Cter in ubiquitin) linkage. Basic and acidic residues predominate over residues 23–35; that stretch reads HTAEDRSLQHDRV. Positions 220-233 are enriched in low complexity; that stretch reads AETATATETVTETE. TPR repeat units follow at residues 304-337, 338-371, 372-409, 410-447, 448-481, 482-515, and 516-549; these read PDPF…NTEH, AEAW…EPGN, LSAL…VVDQ, ARNQ…ANID, ADVQ…RPDD, ALLW…RPSF, and VRAR…HKVE.

The protein belongs to the peroxisomal targeting signal receptor family. In terms of processing, ubiquitination at Cys-10 is UBC4-independent but requires the presence of PEX4. Ubiquitination at Lys-22 is UBC4-dependent.

It is found in the cytoplasm. The protein resides in the peroxisome membrane. Its function is as follows. Binds to the C-terminal PTS1-type tripeptide peroxisomal targeting signal (SKL-type) and plays an essential role in peroxisomal protein import. The sequence is that of Peroxisomal targeting signal receptor (PAY32) from Yarrowia lipolytica (strain CLIB 122 / E 150) (Yeast).